Here is a 325-residue protein sequence, read N- to C-terminus: MTKRVRLSDSFNPVYPYEDESTSQHPFINPGFISPNGFTQSPDGVLTLKCLTPLTTTGGSLQLKVGGGLTVDDTDGTLQENIGTTTPLVKTGHSIGLSLGAGLGTDENKLCTKLGKGLTFNSNNICIDDNINTLWTGINPTEANCQMMDSSESNDCKLILTLVKTGALVTAFVYVIGVSNNFNMLTTYRNINFTAELFFDSAGNLLTSLSSLKTPLNHKSGQNMATGAITNAKSFMPSTTAYPFNNNSREKENYIYGTCHYTASDHTAFPIDISVMLNQRAIRADTSYCIRITWSWNTGDAPEGQTSATTLVTSPFTFYYIREDD.

This sequence belongs to the adenoviridae fiber family. As to quaternary structure, homotrimer. Interacts with host receptor CD46. Interacts (via N-terminal tail region) with pentons.

The protein resides in the virion. Its subcellular location is the host nucleus. Functionally, forms spikes that protrude from each vertex of the icosahedral capsid. Interacts with host receptor CD46 to provide virion initial attachment to target cell. Fiber proteins are shed during virus entry, when virus is still at the cell surface. The sequence is that of Fiber protein from Human adenovirus B serotype 11 (strain BC34) (HAdV-11).